The chain runs to 357 residues: Protein-arginine kinase (357 aa).

One can recognise a Phosphagen kinase C-terminal domain in the interval 24–255 (IVISTRLRIA…RQIIEQERVA (232 aa)). Residues 27-31 (STRLR), His92, Arg126, 177-181 (RASVM), and 208-213 (RGIYGE) contribute to the ATP site. The RDXXRA motif of the pArg binding pocket involved in allosteric regulation motif lies at 338-343 (RDERRA).

This sequence belongs to the ATP:guanido phosphotransferase family.

The enzyme catalyses L-arginyl-[protein] + ATP = N(omega)-phospho-L-arginyl-[protein] + ADP + H(+). Appears to be allosterically activated by the binding of pArg-containing polypeptides to the pArg-binding pocket localized in the C-terminal domain of McsB. Functionally, catalyzes the specific phosphorylation of arginine residues in proteins. This is Protein-arginine kinase from Brevibacillus brevis (strain 47 / JCM 6285 / NBRC 100599).